The chain runs to 200 residues: NADH-quinone oxidoreductase subunit C (200 aa).

Belongs to the complex I 30 kDa subunit family. In terms of assembly, NDH-1 is composed of 14 different subunits. Subunits NuoB, C, D, E, F, and G constitute the peripheral sector of the complex.

The protein localises to the cell inner membrane. The enzyme catalyses a quinone + NADH + 5 H(+)(in) = a quinol + NAD(+) + 4 H(+)(out). In terms of biological role, NDH-1 shuttles electrons from NADH, via FMN and iron-sulfur (Fe-S) centers, to quinones in the respiratory chain. The immediate electron acceptor for the enzyme in this species is believed to be ubiquinone. Couples the redox reaction to proton translocation (for every two electrons transferred, four hydrogen ions are translocated across the cytoplasmic membrane), and thus conserves the redox energy in a proton gradient. This Cereibacter sphaeroides (strain ATCC 17029 / ATH 2.4.9) (Rhodobacter sphaeroides) protein is NADH-quinone oxidoreductase subunit C.